Reading from the N-terminus, the 1456-residue chain is MDTGEAAFGVASLRLRGSMASASSRRAPSYRDYDVFSIASSSRAEAEDDEEALKWAALEKLPTHARVRKGIVAAADDGQGSGAAGEVVDVAGLGFQERKHLLERLVRVAEEDHESFLLKLKQRIDRVGLDFPTIEVRYEHLSIDALAHVGSRGLPTFLNTTLNSLESLANLLHVVPNKKRPLNILHDVHGVIKPRRMTLLLGPPGSGKTTLLLALAGKLGSDLKVSGKVTYNGYGMDEFVAQRSAAYISQHDLHIPEMTVRETLAFSARCQGVGTRYDMLTELARREKAANIKPDPDLDVYMKAISVGGQETNIITDYVLKILGLDICADTIVGNEMLRGISGGQRKRVTTGEMIVGPARAMFMDEISTGLDSSTTFQIVKSLGQITSILGGTTVISLLQPAPETYNLFDDIILLSDGHIVYQGPREHVLEFFESMGFKCPDRKGVADFLQEVTSRKDQQQYWARTHQPYRYIPVQEFACAFQSFHVGQTLSDELSHPFDKSTSHPASLTTSTYGASKLELLRTCIARELLLMKRNMFVYRFRAFQLLVITIIVMTLFLRTNMHHETRTDGIVYLGALFFAMVAHMFNGFSELAMATIKLPVFFKQRDYLFFPSWAYTIPTWILKIPISCFEVAITVFLSYYVIGFDPNVGRLFKQYLLLLLVNQMAAALFRFIAALGRTMVVANTLASFALLVLLVLSGFILSHHDVKKWWIWGYWISPLQYAMNAIAVNEFLGHKWNRLVQGTNTTLGIEVLKSRGMFTEAKWYWIGVGALFGYVIVFNILFTIALGYLKPSGKAQQILSEEALKEKHANITGETINDPRNSASSGQTTNTRRNAAPGEASENRRGMVLPFAPLAVAFNNIRYSVDMPPEMKAQGVDQDRLLLLKGVSGSFRPGVLTALMGVSGAGKTTLMDVLAGRKTGGYIEGDISISGYPKKQETFARVSGYCEQNDIHSPNVTVYESLAYSAWLRLPSDVDSETRKMFIEQVMELVELNPLRDALVGLPGVNGLSTEQRKRLTIAVELVANPSIIFMDEPTSGLDARAAAIVMRTVRNTVDTGRTVVCTIHQPSIDIFEAFDELFLMKRGGEEIYVGPLGHHSCDLIEYFEGVEGVSKIKPGYNPATWMLEVTTLAQEDVLGISFTDVYKNSDLYQRNQSLIKGISRPPQGSKDLFFPTQFSQSFSTQCMACLWKQNLSYWRNPPYTVVRFFFSLIVALMFGTIFWRLGSKRSRQQDLFNAMGSMYAAVLFMGISYSSSVQPVVAVERTVFYRERAAGMYSALPYAFGQVVVELPYVLVQSAVYGVIVYAMIGFEWEAKKFFWYLYFMYFTLLYFTFYGMLAVGLTPSYNIASIVSSFFYGIWNLFSGFVIPRPSMPVWWRWYSWACPVSWTLYGLVASQFGDLKEPLRDTGVPIDVFLREYFGFKHDFLGVVAVAVAGFATLFAVSFSLSIKMLNFQRR.

Positions 169 to 442 constitute an ABC transporter 1 domain; the sequence is ANLLHVVPNK…FESMGFKCPD (274 aa). 202–209 contributes to the ATP binding site; that stretch reads GPPGSGKT. In terms of domain architecture, ABC transmembrane type-2 1 spans 520-733; sequence ELLRTCIARE…AMNAIAVNEF (214 aa). 6 helical membrane passes run 538–558, 571–591, 626–646, 658–678, 682–702, and 768–788; these read FVYRFRAFQLLVITIIVMTLF, GIVYLGALFFAMVAHMFNGFS, IPISCFEVAITVFLSYYVIGF, LLLLLVNQMAAALFRFIAALG, VVANTLASFALLVLLVLSGFI, and IGVGALFGYVIVFNILFTIAL. The disordered stretch occupies residues 812–844; it reads NITGETINDPRNSASSGQTTNTRRNAAPGEASE. The segment covering 814 to 835 has biased composition (polar residues); that stretch reads TGETINDPRNSASSGQTTNTRR. The 253-residue stretch at 858–1110 folds into the ABC transporter 2 domain; it reads VAFNNIRYSV…DLIEYFEGVE (253 aa). Position 903–910 (903–910) interacts with ATP; that stretch reads GVSGAGKT. Positions 1183–1397 constitute an ABC transmembrane type-2 2 domain; it reads TQCMACLWKQ…TLYGLVASQF (215 aa). A run of 7 helical transmembrane segments spans residues 1202–1222, 1242–1262, 1290–1310, 1317–1337, 1347–1367, 1378–1398, and 1425–1445; these read YTVVRFFFSLIVALMFGTIFW, YAAVLFMGISYSSSVQPVVAV, LPYVLVQSAVYGVIVYAMIGF, FFWYLYFMYFTLLYFTFYGML, IASIVSSFFYGIWNLFSGFVI, WYSWACPVSWTLYGLVASQFG, and FLGVVAVAVAGFATLFAVSFS.

Belongs to the ABC transporter superfamily. ABCG family. PDR (TC 3.A.1.205) subfamily.

It localises to the membrane. Its function is as follows. May be a general defense protein. This chain is ABC transporter G family member 44, found in Oryza sativa subsp. japonica (Rice).